A 664-amino-acid chain; its full sequence is uncharacterized protein (664 aa).

Positions 1-35 are cleaved as a signal peptide; sequence MGVSVLTFHVSLFLKRILSIAFFLLSLSTLLRIVN. N-linked (GlcNAc...) asparagine glycans are attached at residues Asn-101 and Asn-138. Sel1-like repeat units follow at residues 141-178 and 179-214; these read AFAN…KQGS and LDAH…DHLF. Residues Asn-221, Asn-300, and Asn-371 are each glycosylated (N-linked (GlcNAc...) asparagine). Sel1-like repeat units follow at residues 337-372, 373-409, 410-441, and 442-477; these read AQSC…TKND, SNSY…MNEN, PHAL…TQKS, and VISY…EAIR. N-linked (GlcNAc...) asparagine glycans are attached at residues Asn-454 and Asn-537. Sel1-like repeat units follow at residues 564–599 and 601–636; these read IDAI…EQSS and GMGL…SNQN.

It belongs to the sel-1 family.

This is an uncharacterized protein from Schizosaccharomyces pombe (strain 972 / ATCC 24843) (Fission yeast).